A 637-amino-acid polypeptide reads, in one-letter code: Chaperone protein HtpG (637 aa).

The interval 1 to 345 (MSQQETHGFQ…SNDLPLNVSR (345 aa)) is a; substrate-binding. A b region spans residues 346–562 (EILQDNQVTT…EGEMSTQMIK (217 aa)). The c stretch occupies residues 563–637 (LMQAAGQAVP…MNQMLLANAK (75 aa)).

The protein belongs to the heat shock protein 90 family. Homodimer.

The protein resides in the cytoplasm. Functionally, molecular chaperone. Has ATPase activity. The polypeptide is Chaperone protein HtpG (Shewanella denitrificans (strain OS217 / ATCC BAA-1090 / DSM 15013)).